A 348-amino-acid chain; its full sequence is MSKQTLILLYGGRSAEREVSVLSAESVMRAVDYNAFEVKTYFITQSGDFIKTQEFIETPGDDEKLMTNDTVEASQAIKPSDIYEEDAVVFPVLHGPMGEDGSIQGFLETLKLPYVGTNVLSSSVAMDKIMTKRILEVAGVPQVAYTGYIEGEDLEAAVAETLEKLTFPVFVKPANMGSSVGISKAENESELRSAIDLALKYDSRILIEQGVVAREIEVGILGNTTVKTTDPGEVVKDVAFYDYQAKYIDNKITMDIPARVPVEVMTQMRAYAAKAFRALGGCGLARCDFFLTEDGAIYLNELNTMPGFTQWSMYPLLWENMGLSYSDLIKELVVLGQEMFDKRESHLI.

In terms of domain architecture, ATP-grasp spans 132–334; the sequence is KRILEVAGVP…YSDLIKELVV (203 aa). 162–217 provides a ligand contact to ATP; that stretch reads LEKLTFPVFVKPANMGSSVGISKAENESELRSAIDLALKYDSRILIEQGVVAREIE. Mg(2+)-binding residues include aspartate 288, glutamate 301, and asparagine 303.

Belongs to the D-alanine--D-alanine ligase family. Mg(2+) serves as cofactor. Mn(2+) is required as a cofactor.

The protein localises to the cytoplasm. It carries out the reaction 2 D-alanine + ATP = D-alanyl-D-alanine + ADP + phosphate + H(+). Its pathway is cell wall biogenesis; peptidoglycan biosynthesis. Its function is as follows. Cell wall formation. This Streptococcus thermophilus (strain ATCC BAA-491 / LMD-9) protein is D-alanine--D-alanine ligase.